The sequence spans 117 residues: Ig heavy chain V region UPC10 (117 aa).

Residues 1-116 (EVKLLESGGG…WGQVTTLTVS (116 aa)) form the Ig-like domain.

The polypeptide is Ig heavy chain V region UPC10 (Mus musculus (Mouse)).